The primary structure comprises 585 residues: MASVVVKTIWQSKEIHEAGDPPAGVESRAQLVPEAPGGVTSPAKGITKKKKAVSFHGVEPRMSHEPMHWCLNLKRSSACTNVSLLNLAAVEPDSSGTDSTTEDSGPLALPGPPASPTTPWAPEDPDITELLSGVNSGLVRAKDSITSLKEKTTRVNQHVQTLQSECSVLSENLERRRQEAEELEGYCSQLKGPRPDVLTQENCRKVTRSVEDAEIKTNVLKQNSALLEEKLRYLQQQLQDETPRRQEAELQELEQKLEAGLSRHGLSPATPIQGCSGPPGSPEEPPRQRGLSSSGWGMAVRTGEGPSLSEQELQKVSTGLEELRREVSSLAARWHQEEGAVQEALRLLGGLGGRLDGFLGQWERAQREQAQSARGLQELRGRADELCTMVERSAVSVASLRSELEALGPVKPILEELGRQLQNSRRGADHVLNLDRSAQGPCARCASQGQQLSTESLQQLLERALTPLVDEVKQKGLAPACPSCQRLHKKILELERQALAKHVRAEALSSTLRLAQDEAVRAKNLLLTDKMKPEEKVATLDYMHLKMCSLHDQLSHLPLEGSTGAMGGGSNGGAPPKRGSPGSEQ.

Positions 91–108 (EPDSSGTDSTTEDSGPLA) are enriched in low complexity. The interval 91 to 125 (EPDSSGTDSTTEDSGPLALPGPPASPTTPWAPEDP) is disordered. At S224 the chain carries Phosphoserine. Disordered regions lie at residues 264–312 (HGLS…SEQE) and 559–585 (LEGS…GSEQ). At S281 the chain carries Phosphoserine; by TSSK1 and TSSK2. S309 carries the phosphoserine modification.

Phosphorylated on serine residue(s) by STK22A/TSSK1 and STK22B/TSSK2. Testis specific.

It localises to the cytoplasm. The protein localises to the cytoskeleton. The protein resides in the microtubule organizing center. Its subcellular location is the centrosome. It is found in the centriole. It localises to the cytoplasmic vesicle. The protein localises to the secretory vesicle. The protein resides in the acrosome. May play a role in testicular physiology, most probably in the process of spermatogenesis or spermatid development. In Mus musculus (Mouse), this protein is Testis-specific serine kinase substrate (Tsks).